We begin with the raw amino-acid sequence, 316 residues long: E3 ubiquitin-protein ligase rnf146 (316 aa).

The segment at 36 to 74 (CAICLQTCVHPVSLPCKHIFCYLCVKGASWLGRRCALCR) adopts an RING-type zinc-finger fold. One can recognise a WWE domain in the interval 91–167 (EELKSASRGN…EHGRRRKIKR (77 aa)). A glycoprotein contacts are provided by Tyr107, Arg110, Trp114, Tyr144, Gln153, Arg163, and Lys175. Residues 257 to 316 (GRNNIGEGEEGQPLINARMPAPSALLEESEPSDSNDHGSPTLQHNSLLVPQSNRLPFGNP) are disordered. Residues 293-310 (HGSPTLQHNSLLVPQSNR) are compositionally biased toward polar residues.

It is found in the cytoplasm. The protein localises to the cytosol. The protein resides in the nucleus. It carries out the reaction S-ubiquitinyl-[E2 ubiquitin-conjugating enzyme]-L-cysteine + [acceptor protein]-L-lysine = [E2 ubiquitin-conjugating enzyme]-L-cysteine + N(6)-ubiquitinyl-[acceptor protein]-L-lysine.. It participates in protein modification; protein ubiquitination. Functionally, E3 ubiquitin-protein ligase that specifically binds poly-ADP-ribosylated proteins and mediates their ubiquitination and subsequent degradation. May regulate many important biological processes, such as cell survival and DNA damage response. Acts as an activator of the Wnt signaling pathway by mediating the ubiquitination of poly-ADP-ribosylated proteins. Neuroprotective protein. Protects against cell death induced by DNA damaging agents and rescues cells from G1 arrest. Promotes cell survival after gamma-irradiation. Facilitates DNA repair. This is E3 ubiquitin-protein ligase rnf146 (rnf146) from Xenopus tropicalis (Western clawed frog).